We begin with the raw amino-acid sequence, 242 residues long: Guanylate kinase (242 aa).

The Guanylate kinase-like domain occupies 22–200; it reads GLLIVMTGAS…AVRELQAVQR (179 aa). 29 to 36 is a binding site for ATP; sequence GASGVGKG.

Belongs to the guanylate kinase family.

Its subcellular location is the cytoplasm. The enzyme catalyses GMP + ATP = GDP + ADP. Essential for recycling GMP and indirectly, cGMP. This is Guanylate kinase from Deinococcus geothermalis (strain DSM 11300 / CIP 105573 / AG-3a).